Here is a 478-residue protein sequence, read N- to C-terminus: TFIIA-alpha and beta-like factor (478 aa).

The interval 309 to 427 (VKQPRNIEEP…SGDDVSEQDV (119 aa)) is disordered. The span at 390–401 (SISNEDSATNSS) shows a compositional bias: polar residues. The segment covering 411-427 (VEEDPLNSGDDVSEQDV) has biased composition (acidic residues).

Belongs to the TFIIA subunit 1 family. As to expression, testis specific. Detected in adult testis mostly in round and elongating spermatids (at protein level). Detected in testis.

The protein localises to the nucleus. Its function is as follows. May function as a testis specific transcription factor. Binds DNA in conjunction with GTF2A2 and TBP (the TATA-binding protein) and together with GTF2A2, allows mRNA transcription. The protein is TFIIA-alpha and beta-like factor (GTF2A1L) of Homo sapiens (Human).